Consider the following 453-residue polypeptide: UPF0210 protein Mbur_0828 (453 aa).

The protein belongs to the UPF0210 family.

This is UPF0210 protein Mbur_0828 from Methanococcoides burtonii (strain DSM 6242 / NBRC 107633 / OCM 468 / ACE-M).